The chain runs to 213 residues: DELTA-actitoxin-Aas1a (213 aa).

The N-terminal stretch at 1 to 19 (MSRLIIAFIVVTMVCSAIA) is a signal peptide. The propeptide occupies 20–34 (LPKKKVEPLEKDEKR). The tract at residues 37 to 46 (AVAGAVIEGG) is plays an important role in the hemolytic activity. The tract at residues 45-64 (GGNLVMSVLDRILEAIGDVN) is N-terminal region. Phosphocholine contacts are provided by serine 88, valine 121, serine 139, proline 141, tyrosine 167, tyrosine 171, and tyrosine 172. The trp-rich region, which is important for the binding to lipid membrane stretch occupies residues 139–154 (SIPYDYNLYSNWWNVK). The Cell attachment site, crucial for protein stability motif lies at 178 to 180 (KGD).

This sequence belongs to the actinoporin family. Sea anemone subfamily. Octamer or nonamer in membranes. Monomer in the soluble state.

It is found in the secreted. The protein localises to the nematocyst. Its subcellular location is the target cell membrane. Functionally, pore-forming protein that forms cation-selective hydrophilic pores of around 1 nm and causes cytolysis. Pore formation is a multi-step process that involves specific recognition of membrane sphingomyelin (but neither cholesterol nor phosphatidylcholine) using aromatic rich region and adjacent phosphocholine (POC) binding site, firm binding to the membrane (mainly driven by hydrophobic interactions) accompanied by the transfer of the N-terminal region to the lipid-water interface and finally pore formation after oligomerization of monomers. This protein shows potent hemolytic activity (EC(50)=8.8 ng/ml) that is specifically inhibited by sphingomyelin. Shows no phospholipase A2 activity, nor antimicrobial activity against the four bacteria tested. Is lethal to crayfish. The polypeptide is DELTA-actitoxin-Aas1a (Anthopleura asiatica (Sea anemone)).